A 344-amino-acid polypeptide reads, in one-letter code: Methionine import ATP-binding protein MetN 1 (344 aa).

Residues 2 to 241 (IEIRNISQRF…PHHEVTRALI (240 aa)) form the ABC transporter domain. 38–45 (GRSGAGKS) is a binding site for ATP.

Belongs to the ABC transporter superfamily. Methionine importer (TC 3.A.1.24) family. In terms of assembly, the complex is composed of two ATP-binding proteins (MetN), two transmembrane proteins (MetI) and a solute-binding protein (MetQ).

It localises to the cell inner membrane. It catalyses the reaction L-methionine(out) + ATP + H2O = L-methionine(in) + ADP + phosphate + H(+). It carries out the reaction D-methionine(out) + ATP + H2O = D-methionine(in) + ADP + phosphate + H(+). Part of the ABC transporter complex MetNIQ involved in methionine import. Responsible for energy coupling to the transport system. This Paraburkholderia xenovorans (strain LB400) protein is Methionine import ATP-binding protein MetN 1.